Reading from the N-terminus, the 436-residue chain is Anaerobic glycerol-3-phosphate dehydrogenase subunit B (436 aa).

Belongs to the anaerobic G-3-P dehydrogenase subunit B family. Composed of a catalytic GlpA/B dimer and of membrane bound GlpC. The cofactor is FMN.

It catalyses the reaction a quinone + sn-glycerol 3-phosphate = dihydroxyacetone phosphate + a quinol. The protein operates within polyol metabolism; glycerol degradation via glycerol kinase pathway; glycerone phosphate from sn-glycerol 3-phosphate (anaerobic route): step 1/1. Conversion of glycerol 3-phosphate to dihydroxyacetone. Uses fumarate or nitrate as electron acceptor. In Vibrio cholerae serotype O1 (strain M66-2), this protein is Anaerobic glycerol-3-phosphate dehydrogenase subunit B.